We begin with the raw amino-acid sequence, 167 residues long: Phosphorelay intermediate protein YPD1 (167 aa).

The 106-residue stretch at Asp-24–Asp-129 folds into the HPt domain. His-64 carries the post-translational modification Phosphohistidine.

This sequence belongs to the YPD1 family. In terms of assembly, interacts with the response regulatory domains of SLN1 and SSK1. In terms of processing, the phosphorelay mechanism involves the sequential transfer of a phosphate group from 'His-576' (H1) to 'Asp-1144' (D1) of SLN1, then to His-64 (H2) of YPD1 and finally to 'Asp-554' (D2) of SSK1 or 'Asp-427' (D2) of SKN7.

It localises to the cytoplasm. It is found in the nucleus. Its function is as follows. Phosphorelay intermediate protein that is part of the branched SLN1-YPD1-SKN7/SSK1 two-component regulatory system, which controls activity of the HOG1 pathway and gene expression in response to changes in the osmolarity of the extracellular environment. Catalyzes the phosphoryl group transfer from the membrane-bound osmosensing histidine kinase SLN1 to two distinct response regulator proteins, SSK1 in the cytoplasm, and transcription factor SKN7 in the nucleus. The sequence is that of Phosphorelay intermediate protein YPD1 (YPD1) from Saccharomyces cerevisiae (strain ATCC 204508 / S288c) (Baker's yeast).